We begin with the raw amino-acid sequence, 239 residues long: Orotidine 5'-phosphate decarboxylase (239 aa).

Substrate-binding positions include D11, K33, 60–69, T123, R185, Q194, G214, and R215; that span reads DLKCHDIPTT. The Proton donor role is filled by K62.

It belongs to the OMP decarboxylase family. Type 1 subfamily. Homodimer.

It carries out the reaction orotidine 5'-phosphate + H(+) = UMP + CO2. It participates in pyrimidine metabolism; UMP biosynthesis via de novo pathway; UMP from orotate: step 2/2. In terms of biological role, catalyzes the decarboxylation of orotidine 5'-monophosphate (OMP) to uridine 5'-monophosphate (UMP). This is Orotidine 5'-phosphate decarboxylase from Bacillus licheniformis (strain ATCC 14580 / DSM 13 / JCM 2505 / CCUG 7422 / NBRC 12200 / NCIMB 9375 / NCTC 10341 / NRRL NRS-1264 / Gibson 46).